The chain runs to 275 residues: Translation initiation factor 2 subunit alpha (275 aa).

In terms of domain architecture, S1 motif spans 12 to 83; the sequence is GEFVVATVKN…EKGHIDLSLK (72 aa).

It belongs to the eIF-2-alpha family. In terms of assembly, heterotrimer composed of an alpha, a beta and a gamma chain.

Functionally, eIF-2 functions in the early steps of protein synthesis by forming a ternary complex with GTP and initiator tRNA. This chain is Translation initiation factor 2 subunit alpha, found in Thermococcus kodakarensis (strain ATCC BAA-918 / JCM 12380 / KOD1) (Pyrococcus kodakaraensis (strain KOD1)).